Consider the following 93-residue polypeptide: Large ribosomal subunit protein bL27 (93 aa).

Positions 1–8 are excised as a propeptide; the sequence is MIMDLQFF. A disordered region spans residues 8 to 29; sequence FSHHKGGGSTANGRNSAGRRLG.

The protein belongs to the bacterial ribosomal protein bL27 family. Post-translationally, the N-terminus is cleaved by ribosomal processing cysteine protease Prp.

The sequence is that of Large ribosomal subunit protein bL27 from Limosilactobacillus reuteri (strain DSM 20016) (Lactobacillus reuteri).